The sequence spans 892 residues: Exo-beta-D-glucosaminidase (892 aa).

Residues 1 to 18 (MLANAIAALLLGSGIASA) form the signal peptide. Positions 19–28 (AGHGSPLTSK) are excised as a propeptide. Residues N196, N336, and N440 are each glycosylated (N-linked (GlcNAc...) asparagine). The Proton donor role is filled by D464. E539 acts as the Nucleophile in catalysis. N-linked (GlcNAc...) asparagine glycosylation is found at N557, N578, N689, and N825.

It belongs to the glycosyl hydrolase 2 family. As to quaternary structure, monomer.

Its subcellular location is the secreted. It localises to the extracellular space. It carries out the reaction Hydrolysis of chitosan or chitosan oligosaccharides to remove successive D-glucosamine residues from the non-reducing termini.. Hydrolyzes chitosan and chitooligosaccharides with retention of anomeric configuration. Has no activity against beta-D-galactoside, beta-D-glucuronide, beta-D-mannoside, chitin, glycol chitosan, cellulose, N,N'-diacetylchitibiose and pNP-GlcNAc. In Hypocrea jecorina (Trichoderma reesei), this protein is Exo-beta-D-glucosaminidase.